We begin with the raw amino-acid sequence, 474 residues long: MIIYFAVITCSLKLCRSYYKMLLNVSHTIQCVFSRMSWYTLAVILSTLVTIHASQGPEKFTLATAIVLKRGEDITWSVSRENLKYNYRTVVDTTSKAFAVWHTAGLNFRFVYNYSEAMIRISFKRRFHGEIGYDFDGLGSLLAHAYLPNQGDLSSEIHLDNDEIFSFSMKDSDYEGDNAPTSYFWTVLHEIGHSLGVQHSASPSSIMYGWYKSRSFGNGTIVLPKDDANAIHQLYFSNTKQYAAIPKFEKNKVVTTTPVPPADRSESTTNTTITTCFSFDSLSEIKHDATKDSISAYCAGVYDAISYVRGDLYVFVGDLHWRFDTSGMLHNGYPQPTGATWRLPSGSQVNSVFEWMQYIVIQTGKRYNLFVGTDFVRSVNFKVAPSITFASNNRVYAAFLGKLKDITGHLLRRKNLRWRYLPPIQLLQNELRAATDILVASNGMYIFKSGVHGVVVNGVVEHYKLNKGVWSNCR.

The signal sequence occupies residues 1–17; sequence MIIYFAVITCSLKLCRS. His189 is a Zn(2+) binding site. The active site involves Glu190. Residues His193 and His199 each contribute to the Zn(2+) site. A Hemopexin repeat occupies 299–344; it reads AGVYDAISYVRGDLYVFVGDLHWRFDTSGMLHNGYPQPTGATWRLP.

Belongs to the peptidase M10A family. The cofactor is Zn(2+).

This is Putative matrix metalloproteinase from Heliothis virescens ascovirus 3e (HvAV-3e).